Consider the following 473-residue polypeptide: Anthocyanidin-3-O-glucoside rhamnosyltransferase (473 aa).

This sequence belongs to the UDP-glycosyltransferase family. As to expression, expressed in petals, styles and anthers.

The protein operates within pigment biosynthesis; anthocyanin biosynthesis. In terms of biological role, controls the rhamnosylation of reddish anthocyanidin-3-O-glucosides, which is the first step in a series of modifications that finally yield magenta or blue/purple coloured anthocyanins. Controls the conversion of anthocyanidin-3-O-glucosides to anthocyanidin-3-O-rutinosides. This is Anthocyanidin-3-O-glucoside rhamnosyltransferase from Petunia hybrida (Petunia).